The sequence spans 1059 residues: Potassium transporter TRK1 (1059 aa).

Residues 1–46 (MLYRVSGFYKRHTRNFTNIDYGYYIRNFIHHIASKIYPYAKVVLPN) are Cytoplasmic-facing. Residues 47–67 (FRAAHYFYILTLVILGSILVY) traverse the membrane as a helical segment. Residues 68–73 (PVKTCA) are Extracellular-facing. Residues 74 to 90 (YIDVLFFTAGASTQAGL) lie within the membrane without spanning it. The Extracellular portion of the chain corresponds to 91-99 (NTVNVNDLS). The chain crosses the membrane as a helical span at residues 100 to 122 (LYQQIVLYLLATLATPIFIHGSL). At 123–625 (LFVRLYYFER…LGGIEYRAVK (503 aa)) the chain is on the cytoplasmic side. 3 disordered regions span residues 180–276 (REAE…IDPE), 304–350 (IGSP…EDED), and 404–574 (PWTS…SIEN). A compositionally biased stretch (low complexity) spans 186-203 (SSSSPQSSSSQTSQPVST). A compositionally biased stretch (basic and acidic residues) spans 236-245 (EKIHFEEPQR). Polar residues predominate over residues 335 to 344 (PATNSVGTGN). Residues 412-423 (TLSNSSKKGSLS) show a composition bias toward low complexity. 2 stretches are compositionally biased toward acidic residues: residues 428 to 449 (DTED…SDIS) and 469 to 490 (YEED…DDGE). Residues 524–536 (RSNTLDTPQQNTS) show a composition bias toward polar residues. Basic residues predominate over residues 540–552 (KIRKKAPKRKTPR). The segment covering 556–566 (NASFNQHSNVS) has biased composition (polar residues). A helical transmembrane segment spans residues 626–649 (LLIKIIVVYYVGFNIIPGVMLSIW). Residues 650 to 668 (IYCMPHYKNLMISSSISPA) lie on the Extracellular side of the membrane. The stretch at 669-685 (WWAFFTSQSSFNDLGLT) is an intramembrane region. The Extracellular segment spans residues 686-696 (LTSNSMMSFNQ). Residues 697–713 (NAFVQILCSFLIVIGNT) form a helical membrane-spanning segment. Over 714–757 (GFPILLRFIIWVMFKTARPLSLYKESLGFLLDHPRRCFTLLFPS) the chain is Cytoplasmic. The helical transmembrane segment at 758 to 781 (VPTWWLFFILVVLNGFDLVIFCIL) threads the bilayer. Over 782–796 (DLHDDTFKGVDMGYR) the chain is Extracellular. Residues 797–813 (VLNGLFQAFCTRTVGFS) lie within the membrane without spanning it. Topologically, residues 814-820 (VMDLSQL) are extracellular. A helical transmembrane segment spans residues 821 to 844 (HAATQVSYLIMMYISVLPIAISVR). Residues 845-877 (RTNVYEEQSLGVYAKENAEGVDESAPSNYVGSH) lie on the Cytoplasmic side of the membrane. Residues 878–899 (LRNQLSYDLWYICLGLFIICIA) form a helical membrane-spanning segment. At 900-912 (EGKRLKEQDLRFS) the chain is on the extracellular side. An intramembrane segment occupies 913-931 (IFAVLFEIVSAYGTVGMSM). Residues 932–945 (GYPGVDCSLSGEFN) lie on the Extracellular side of the membrane. Residues 946–968 (VISKLVIIAMMIRGRHRGLPYTI) traverse the membrane as a helical segment. At 969-1059 (DRAIMLPNAA…RYVVRTVSEV (91 aa)) the chain is on the cytoplasmic side.

This sequence belongs to the TrkH potassium transport family.

It localises to the cell membrane. It catalyses the reaction K(+)(in) = K(+)(out). The catalysed reaction is chloride(in) = chloride(out). Its activity is regulated as follows. TRK1-mediated chloride conductance is blocked by 4,4'-diisothiocyanatostilbene-2,2'-disulfonic acid. In terms of biological role, potassium transporter that mediates K(+) influx, as well as Cl(-) efflux as a secondary function. TRK1 is the major K(+) uptake transporter that regulates membrane potential and intracellular pH. The TRK1-mediated Cl(-) efflux should serve as a Cl(-) detoxification route and may play a role in sustaining C.albicans on mammalian epithelial surfaces, or in physiological saline solutions such as saliva. Its function is as follows. Mediates candidacidal activities of cysteine-free peptides, but not of defensins. The hallmark of salivary gland-secreted histatin-5 (Hst 5) killing of C.albicans is the rapid efflux of cellular ATP and other small nucleotides and ions from the cell as well as concurrent intracellular uptake of propidium iodide (PI). TRK1 is the channel for Hst 5-induced killing and histatin-5 may directly or indirectly alter TRK1 function, allowing the efflux of larger anions, including ATP, and the influx of small cationic dyes, such as PI. This chain is Potassium transporter TRK1, found in Candida albicans (Yeast).